The primary structure comprises 246 residues: tRNA (guanine-N(1)-)-methyltransferase (246 aa).

S-adenosyl-L-methionine contacts are provided by residues glycine 113 and 132–137; that span reads LGDFVV.

The protein belongs to the RNA methyltransferase TrmD family. Homodimer.

It is found in the cytoplasm. The enzyme catalyses guanosine(37) in tRNA + S-adenosyl-L-methionine = N(1)-methylguanosine(37) in tRNA + S-adenosyl-L-homocysteine + H(+). Its function is as follows. Specifically methylates guanosine-37 in various tRNAs. This is tRNA (guanine-N(1)-)-methyltransferase from Latilactobacillus sakei subsp. sakei (strain 23K) (Lactobacillus sakei subsp. sakei).